The primary structure comprises 421 residues: MQDSIEQYMQKVGQQARDASRVLTSASTSLKNHALSAIYTALENNQAAILAANQIDMEKGRSNQLDSALLDRLELTPARFKGMLQGLKDVIALVDPIGEITDLAYRPTGIQIGKMRVPLGVVGMIYESRPNVTLEAASLAIKSGNAIILRGGSEALESNKAIAEAVKHGLKVAGLPEHSVQVIETSDRAAVGHLITMAEYVDVIVPRGGKSLIERVTNEARIPVIKHLDGNCHVFVEAQADLQKALPITLNAKTHRYGVCNAMETLLVDEKIAEVFLPHIAELYAEKQVELRGCPETRRILGTTVKPATEEDWYTEYLGPILAVKVVSGIDEAIDHINKYGSHHTDAIVTENYTLARQFLARVDSSSVVVNASTRFADGFEYGLGAEIGISTDKIHARGPVGLEGLTSQKWIVLGDGQIRQ.

This sequence belongs to the gamma-glutamyl phosphate reductase family.

The protein resides in the cytoplasm. The enzyme catalyses L-glutamate 5-semialdehyde + phosphate + NADP(+) = L-glutamyl 5-phosphate + NADPH + H(+). It participates in amino-acid biosynthesis; L-proline biosynthesis; L-glutamate 5-semialdehyde from L-glutamate: step 2/2. Functionally, catalyzes the NADPH-dependent reduction of L-glutamate 5-phosphate into L-glutamate 5-semialdehyde and phosphate. The product spontaneously undergoes cyclization to form 1-pyrroline-5-carboxylate. In Acinetobacter baumannii (strain ACICU), this protein is Gamma-glutamyl phosphate reductase.